A 206-amino-acid polypeptide reads, in one-letter code: Ribosomal RNA small subunit methyltransferase G (206 aa).

S-adenosyl-L-methionine-binding positions include Gly71, Phe76, 125 to 126 (IE), and Arg139.

The protein belongs to the methyltransferase superfamily. RNA methyltransferase RsmG family.

Its subcellular location is the cytoplasm. It catalyses the reaction guanosine(527) in 16S rRNA + S-adenosyl-L-methionine = N(7)-methylguanosine(527) in 16S rRNA + S-adenosyl-L-homocysteine. Specifically methylates the N7 position of guanine in position 527 of 16S rRNA. The chain is Ribosomal RNA small subunit methyltransferase G from Cereibacter sphaeroides (strain ATCC 17023 / DSM 158 / JCM 6121 / CCUG 31486 / LMG 2827 / NBRC 12203 / NCIMB 8253 / ATH 2.4.1.) (Rhodobacter sphaeroides).